The sequence spans 319 residues: Putative binding protein BAB2_1146 (319 aa).

The first 22 residues, 1–22 (MKRRTFLAMSLALTFLPSVALA), serve as a signal peptide directing secretion.

The protein belongs to the bacterial solute-binding protein SsuA/TauA family. The complex is composed of two ATP-binding proteins (BAB2_1147), two transmembrane proteins (BAB2_1148) and a solute-binding protein (BAB2_1146).

It localises to the periplasm. Its function is as follows. Probably part of an ABC transporter complex. The sequence is that of Putative binding protein BAB2_1146 from Brucella abortus (strain 2308).